The primary structure comprises 312 residues: Acetyl-coenzyme A carboxylase carboxyl transferase subunit alpha (312 aa).

The 251-residue stretch at 36 to 286 (NLEKEISKTY…ADYVKKSLNE (251 aa)) folds into the CoA carboxyltransferase C-terminal domain.

It belongs to the AccA family. In terms of assembly, acetyl-CoA carboxylase is a heterohexamer composed of biotin carboxyl carrier protein (AccB), biotin carboxylase (AccC) and two subunits each of ACCase subunit alpha (AccA) and ACCase subunit beta (AccD).

The protein resides in the cytoplasm. It carries out the reaction N(6)-carboxybiotinyl-L-lysyl-[protein] + acetyl-CoA = N(6)-biotinyl-L-lysyl-[protein] + malonyl-CoA. It functions in the pathway lipid metabolism; malonyl-CoA biosynthesis; malonyl-CoA from acetyl-CoA: step 1/1. Component of the acetyl coenzyme A carboxylase (ACC) complex. First, biotin carboxylase catalyzes the carboxylation of biotin on its carrier protein (BCCP) and then the CO(2) group is transferred by the carboxyltransferase to acetyl-CoA to form malonyl-CoA. This Campylobacter jejuni subsp. doylei (strain ATCC BAA-1458 / RM4099 / 269.97) protein is Acetyl-coenzyme A carboxylase carboxyl transferase subunit alpha.